We begin with the raw amino-acid sequence, 531 residues long: Chaperonin GroEL 2 (531 aa).

ATP contacts are provided by residues 30-33 (TLGP), 87-91 (DGTTT), G414, and D494.

The protein belongs to the chaperonin (HSP60) family. Forms a cylinder of 14 subunits composed of two heptameric rings stacked back-to-back. Interacts with the co-chaperonin GroES.

The protein resides in the cytoplasm. It catalyses the reaction ATP + H2O + a folded polypeptide = ADP + phosphate + an unfolded polypeptide.. Its function is as follows. Together with its co-chaperonin GroES, plays an essential role in assisting protein folding. The GroEL-GroES system forms a nano-cage that allows encapsulation of the non-native substrate proteins and provides a physical environment optimized to promote and accelerate protein folding. In Cutibacterium acnes (strain DSM 16379 / KPA171202) (Propionibacterium acnes), this protein is Chaperonin GroEL 2.